Here is a 617-residue protein sequence, read N- to C-terminus: Coiled-coil domain-containing protein 93 (617 aa).

The segment covering 1–16 has biased composition (basic and acidic residues); it reads MVVPRGQEHRAPQEVE. Residues 1-20 form a disordered region; that stretch reads MVVPRGQEHRAPQEVETRED. Coiled coils occupy residues 285–474 and 546–614; these read DEIK…IDEV and LRQM…KLKA.

This sequence belongs to the CCDC93 family.

Its subcellular location is the early endosome. Functionally, may be involved in copper-dependent ATP7A trafficking between the trans-Golgi network and vesicles in the cell periphery. This chain is Coiled-coil domain-containing protein 93 (CCDC93), found in Gallus gallus (Chicken).